Reading from the N-terminus, the 413-residue chain is Elongation factor 1-alpha (413 aa).

Residues 1–7 (HVDSGKS), 77–81 (DAPGH), and 139–142 (NKMD) contribute to the GTP site. Residues 1–228 (HVDSGKSTTT…DAILPPARPT (228 aa)) form the tr-type G domain. Residues glutamate 287 and glutamate 360 each carry the 5-glutamyl glycerylphosphorylethanolamine modification.

It belongs to the TRAFAC class translation factor GTPase superfamily. Classic translation factor GTPase family. EF-Tu/EF-1A subfamily.

It is found in the cytoplasm. This protein promotes the GTP-dependent binding of aminoacyl-tRNA to the A-site of ribosomes during protein biosynthesis. The chain is Elongation factor 1-alpha from Heliocheilus albipunctella (Millet head miner).